The following is a 136-amino-acid chain: Protein PsiE (136 aa).

The next 4 membrane-spanning stretches (helical) occupy residues 15-35 (ILQT…VVFL), 55-75 (YELV…ALIV), 82-102 (FHFP…RLII), and 108-128 (PLDV…LWLC).

It belongs to the PsiE family.

It localises to the cell inner membrane. This Escherichia coli O17:K52:H18 (strain UMN026 / ExPEC) protein is Protein PsiE.